The primary structure comprises 283 residues: Protein/nucleic acid deglycase HchA (283 aa).

Residues His-86, Glu-91, and His-123 each coordinate Zn(2+). The Nucleophile role is filled by Cys-185.

Belongs to the peptidase C56 family. HchA subfamily. In terms of assembly, homodimer.

It is found in the cytoplasm. It carries out the reaction N(omega)-(1-hydroxy-2-oxopropyl)-L-arginyl-[protein] + H2O = lactate + L-arginyl-[protein] + H(+). The enzyme catalyses N(6)-(1-hydroxy-2-oxopropyl)-L-lysyl-[protein] + H2O = lactate + L-lysyl-[protein] + H(+). The catalysed reaction is S-(1-hydroxy-2-oxopropyl)-L-cysteinyl-[protein] + H2O = lactate + L-cysteinyl-[protein] + H(+). It catalyses the reaction N(omega)-(1-hydroxy-2-oxoethyl)-L-arginyl-[protein] + H2O = L-arginyl-[protein] + glycolate + H(+). It carries out the reaction N(6)-(1-hydroxy-2-oxoethyl)-L-lysyl-[protein] + H2O = glycolate + L-lysyl-[protein] + H(+). The enzyme catalyses S-(1-hydroxy-2-oxoethyl)-L-cysteinyl-[protein] + H2O = glycolate + L-cysteinyl-[protein] + H(+). The catalysed reaction is N(2)-(1-hydroxy-2-oxopropyl)-dGTP + H2O = lactate + dGTP + H(+). It catalyses the reaction N(2)-(1-hydroxy-2-oxopropyl)-GTP + H2O = lactate + GTP + H(+). It carries out the reaction N(2)-(1-hydroxy-2-oxopropyl)-GDP + H2O = lactate + GDP + H(+). The enzyme catalyses N(2)-(1-hydroxy-2-oxopropyl)-GMP + H2O = lactate + GMP + H(+). The catalysed reaction is N(2)-(1-hydroxy-2-oxoethyl)-dGTP + H2O = dGTP + glycolate + H(+). It catalyses the reaction N(2)-(1-hydroxy-2-oxoethyl)-GTP + H2O = glycolate + GTP + H(+). It carries out the reaction N(2)-(1-hydroxy-2-oxoethyl)-GDP + H2O = glycolate + GDP + H(+). The enzyme catalyses N(2)-(1-hydroxy-2-oxoethyl)-GMP + H2O = glycolate + GMP + H(+). The catalysed reaction is an N(2)-(1-hydroxy-2-oxopropyl)-guanosine in RNA + H2O = a guanosine in RNA + lactate + H(+). It catalyses the reaction an N(2)-(1-hydroxy-2-oxopropyl)-2'-deoxyguanosine in DNA + H2O = a 2'-deoxyguanosine in DNA + lactate + H(+). It carries out the reaction an N(2)-(1-hydroxy-2-oxoethyl)-guanosine in RNA + H2O = a guanosine in RNA + glycolate + H(+). The enzyme catalyses an N(2)-(1-hydroxy-2-oxoethyl)-2'-deoxyguanosine in DNA + H2O = a 2'-deoxyguanosine in DNA + glycolate + H(+). Functionally, protein and nucleotide deglycase that catalyzes the deglycation of the Maillard adducts formed between amino groups of proteins or nucleotides and reactive carbonyl groups of glyoxals. Thus, functions as a protein deglycase that repairs methylglyoxal- and glyoxal-glycated proteins, and releases repaired proteins and lactate or glycolate, respectively. Deglycates cysteine, arginine and lysine residues in proteins, and thus reactivates these proteins by reversing glycation by glyoxals. Acts on early glycation intermediates (hemithioacetals and aminocarbinols), preventing the formation of Schiff bases and advanced glycation endproducts (AGE). Also functions as a nucleotide deglycase able to repair glycated guanine in the free nucleotide pool (GTP, GDP, GMP, dGTP) and in DNA and RNA. Is thus involved in a major nucleotide repair system named guanine glycation repair (GG repair), dedicated to reversing methylglyoxal and glyoxal damage via nucleotide sanitization and direct nucleic acid repair. Plays an important role in protecting cells from carbonyl stress. The sequence is that of Protein/nucleic acid deglycase HchA from Shigella flexneri.